A 136-amino-acid chain; its full sequence is Protein NrdI (136 aa).

The protein belongs to the NrdI family.

Probably involved in ribonucleotide reductase function. The polypeptide is Protein NrdI (Escherichia coli O127:H6 (strain E2348/69 / EPEC)).